The chain runs to 327 residues: DNA-directed RNA polymerase subunit alpha (327 aa).

The tract at residues 1–233 (MQNSASEFLK…DQLSIFADLQ (233 aa)) is alpha N-terminal domain (alpha-NTD). Residues 247-327 (IDPILLRPVD…NWPPAGLEKP (81 aa)) form an alpha C-terminal domain (alpha-CTD) region.

It belongs to the RNA polymerase alpha chain family. In terms of assembly, homodimer. The RNAP catalytic core consists of 2 alpha, 1 beta, 1 beta' and 1 omega subunit. When a sigma factor is associated with the core the holoenzyme is formed, which can initiate transcription.

The enzyme catalyses RNA(n) + a ribonucleoside 5'-triphosphate = RNA(n+1) + diphosphate. DNA-dependent RNA polymerase catalyzes the transcription of DNA into RNA using the four ribonucleoside triphosphates as substrates. The protein is DNA-directed RNA polymerase subunit alpha of Chromobacterium violaceum (strain ATCC 12472 / DSM 30191 / JCM 1249 / CCUG 213 / NBRC 12614 / NCIMB 9131 / NCTC 9757 / MK).